The primary structure comprises 178 residues: Ribosome maturation factor RimM (178 aa).

The 78-residue stretch at 101 to 178 (DGEYYWYQLQ…EMKVEWDADF (78 aa)) folds into the PRC barrel domain.

The protein belongs to the RimM family. As to quaternary structure, binds ribosomal protein uS19.

The protein localises to the cytoplasm. An accessory protein needed during the final step in the assembly of 30S ribosomal subunit, possibly for assembly of the head region. Essential for efficient processing of 16S rRNA. May be needed both before and after RbfA during the maturation of 16S rRNA. It has affinity for free ribosomal 30S subunits but not for 70S ribosomes. In Pseudomonas fluorescens (strain ATCC BAA-477 / NRRL B-23932 / Pf-5), this protein is Ribosome maturation factor RimM.